A 370-amino-acid polypeptide reads, in one-letter code: uncharacterized protein (370 aa).

Residues 1–27 form the signal peptide; the sequence is MSSAANEGCVYLFIVVLRLSSFSCVNS. 3 N-linked (GlcNAc...) asparagine glycosylation sites follow: Asn-59, Asn-98, and Asn-126. Disordered stretches follow at residues 81 to 101 and 123 to 167; these read SRSH…NTTA and LSEN…CHQP. Acidic residues predominate over residues 139-148; it reads HDDDDDDDLE. 4 N-linked (GlcNAc...) asparagine glycosylation sites follow: Asn-171, Asn-221, Asn-230, and Asn-262.

This is an uncharacterized protein from Saccharomyces cerevisiae (strain ATCC 204508 / S288c) (Baker's yeast).